The chain runs to 727 residues: Pentatricopeptide repeat-containing protein At2g33680 (727 aa).

17 PPR repeats span residues 13-47 (HTST…GAST), 48-78 (CIQH…IICK), 79-116 (DVVS…DILP), 117-150 (NAYT…MSSF), 152-182 (DIYV…MPER), 183-213 (NTYT…FLRE), 220-254 (SDYV…GLLG), 255-285 (FVAL…SGDR), 286-320 (NSIT…GIKP), 321-355 (SEYT…GFER), 356-386 (HLFA…LQER), 387-421 (DVAL…GIIP), 422-456 (NDPT…GFGL), 457-487 (EVPI…TPNK), 488-522 (DVVS…GMEP), 523-553 (DDVT…MSDQ), and 559-593 (KVDH…HGLC). The type E motif stretch occupies residues 594 to 669 (LWRILLSACK…EVGCSWIELK (76 aa)). A type E(+) motif region spans residues 670-700 (NQYHVFVVGDTMHPMIEETKDLVCLVSRQMI).

Belongs to the PPR family. PCMP-E subfamily.

This is Pentatricopeptide repeat-containing protein At2g33680 (PCMP-E19) from Arabidopsis thaliana (Mouse-ear cress).